We begin with the raw amino-acid sequence, 131 residues long: Arsenate reductase (131 aa).

Residues Cys-10, Cys-82, and Cys-89 each act as nucleophile in the active site. 2 disulfide bridges follow: Cys-10/Cys-82 and Cys-82/Cys-89.

This sequence belongs to the low molecular weight phosphotyrosine protein phosphatase family. Thioredoxin-coupled ArsC subfamily.

Its subcellular location is the cytoplasm. The catalysed reaction is arsenate + [thioredoxin]-dithiol + H(+) = arsenite + [thioredoxin]-disulfide + H2O. Its function is as follows. Catalyzes the reduction of arsenate [As(V)] to arsenite [As(III)]. The protein is Arsenate reductase of Staphylococcus xylosus.